The primary structure comprises 117 residues: Modulator protein MzrA (117 aa).

Over 1 to 11 (MMTNRRFRKPS) the chain is Cytoplasmic. Residues 12-29 (AWRLLLLLLPLVVLLSMS) form a helical membrane-spanning segment. At 30 to 117 (SRRLPDEVML…SNGTSPVTRS (88 aa)) the chain is on the periplasmic side.

Belongs to the MzrA family. As to quaternary structure, interacts with EnvZ.

Its subcellular location is the cell inner membrane. Modulates the activity of the EnvZ/OmpR two-component regulatory system, probably by directly modulating EnvZ enzymatic activity and increasing stability of phosphorylated OmpR. The polypeptide is Modulator protein MzrA (Dickeya dadantii (strain 3937) (Erwinia chrysanthemi (strain 3937))).